The primary structure comprises 159 residues: Troponin C, skeletal muscle (159 aa).

An N-acetylthreonine modification is found at Thr-1. EF-hand domains lie at 14–49 (EMIAEFKAAFDMFDADGGGDISVKELGTVMRMLGQT), 50–85 (PTKEELDAIIEEVDEDGSGTIDFEEFLVMMVRQMKE), 90–125 (KSEEELAECFRIFDRNMDGYIDAEELAEIFRASGEH), and 126–159 (VTDEEIESIMKDGDKNNDGRIDFDEFLKMMEGVQ). Asp-27, Asp-29, Asp-33, Glu-38, Asp-63, Asp-65, Ser-67, Thr-69, Glu-74, Asp-103, Asn-105, Asp-107, Tyr-109, Glu-114, Asp-139, Asn-141, Asp-143, Arg-145, and Glu-150 together coordinate Ca(2+).

This sequence belongs to the troponin C family.

Its function is as follows. Troponin is the central regulatory protein of striated muscle contraction. Tn consists of three components: Tn-I which is the inhibitor of actomyosin ATPase, Tn-T which contains the binding site for tropomyosin and Tn-C. The binding of calcium to Tn-C abolishes the inhibitory action of Tn on actin filaments. The polypeptide is Troponin C, skeletal muscle (TNNC2) (Sus scrofa (Pig)).